Consider the following 613-residue polypeptide: RNA polymerase-associated protein RTF1 homolog (613 aa).

Disordered stretches follow at residues 1–90 (MSSS…DKAR) and 121–247 (QQLA…KDKI). A compositionally biased stretch (basic residues) spans 55–68 (PAKKKTLTKRKRRA). The segment covering 72–81 (SDDDQVDDDL) has biased composition (acidic residues). A compositionally biased stretch (basic and acidic residues) spans 167-176 (AAFHRPSDIN). The stretch at 175–209 (INRKHKEKNAMDALKNKRKEIEKKNAKNEALSIDA) forms a coiled coil. Residues 215–235 (SGSSSSSSSSESSRSSSSSRE) are compositionally biased toward low complexity. The span at 236–247 (SSPERVSEKDKI) shows a compositional bias: basic and acidic residues. The Plus3 domain occupies 252-383 (VDGLSELRRA…KKQDIEKAIN (132 aa)). Residues 425 to 462 (RGDIREAEQIQTKIDEIERQADELEKERSKSISAIAFI) are a coiled coil. 2 disordered regions span residues 485-549 (SQDD…KTDI) and 564-613 (LKDF…SSAV). Over residues 510–521 (TLSASSSTTNLS) the composition is skewed to low complexity. Positions 569 to 586 (TPESSGNKRPSISSSKGV) are enriched in polar residues. Over residues 602 to 613 (GSSTSAAPSSAV) the composition is skewed to low complexity.

Component of the PAF1 complex which consists of at least cdc-73, ctr-9, leo-1, pafo-1 and rtfo-1.

It is found in the nucleus. Functionally, component of the PAF1 complex which is a multifunctional complex involved in transcription initiation via genetic interactions with TATA-binding proteins, elongation and transcription-coupled histone modification. This Caenorhabditis elegans protein is RNA polymerase-associated protein RTF1 homolog.